Reading from the N-terminus, the 115-residue chain is Skin calcitonin gene-related peptide (115 aa).

The signal sequence occupies residues 1–25 (MVLLKISSLLAVLGLLVCQMYSSQA). A propeptide spans 26–69 (APARRALEPLPDRVTEAHRLLRALIRELTAEDMEASSSGAAHKR) (removed in mature form by a carboxypeptidase). Cys-71 and Cys-76 are oxidised to a cystine. At Phe-106 the chain carries Phenylalanine amide. The propeptide at 107-115 (GRRRRSLHV) is removed in mature form by an endoprotease.

In terms of tissue distribution, skin, intestine and brain.

Its subcellular location is the secreted. In terms of biological role, CGRP induces vasodilation. It dilates a variety of vessels including the coronary, cerebral and systemic vasculature. Its abundance in the CNS also points toward a neurotransmitter or neuromodulator role. In Phyllomedusa bicolor (Two-colored leaf frog), this protein is Skin calcitonin gene-related peptide.